The sequence spans 536 residues: Chaperonin GroEL (536 aa).

Residues 29 to 32, 86 to 90, Gly-413, and Asp-494 contribute to the ATP site; these read TLGP and DGTTT.

Belongs to the chaperonin (HSP60) family. In terms of assembly, forms a cylinder of 14 subunits composed of two heptameric rings stacked back-to-back. Interacts with the co-chaperonin GroES.

The protein resides in the cytoplasm. The catalysed reaction is ATP + H2O + a folded polypeptide = ADP + phosphate + an unfolded polypeptide.. In terms of biological role, together with its co-chaperonin GroES, plays an essential role in assisting protein folding. The GroEL-GroES system forms a nano-cage that allows encapsulation of the non-native substrate proteins and provides a physical environment optimized to promote and accelerate protein folding. The protein is Chaperonin GroEL of Acholeplasma laidlawii (strain PG-8A).